The primary structure comprises 280 residues: Retinoschisin (280 aa).

The signal sequence occupies residues 1–23 (MHLPREAFLLALAGAFIFPSSQQ). In terms of domain architecture, F5/8 type C spans 119-275 (CPYHRPLGFE…IALRLELLLC (157 aa)). Disulfide bonds link Cys-119–Cys-275 and Cys-166–Cys-198.

As to quaternary structure, homooctamer of 4 homodimers; disulfide-linked. The homooctamer has a flat, cogwheel structure with a diameter of about 14 nm. Two stacked octamers can assemble to form a hexadecamer.

Its subcellular location is the secreted. The protein resides in the cell membrane. Functionally, binds negatively charged membrane lipids, such as phosphatidylserine and phosphoinositides. May play a role in cell-cell adhesion processes in the retina, via homomeric interaction between octamers present on the surface of two neighboring cells. Required for normal structure and function of the retina. The polypeptide is Retinoschisin (xlrs1) (Takifugu rubripes (Japanese pufferfish)).